We begin with the raw amino-acid sequence, 243 residues long: Membrane selenoprotein (243 aa).

A disordered region spans residues 12 to 63 (GEDCEGGVUARPSSSSSSINNASDESTPLISKTNDEEKANIGISSTSNSPQE). Residue Sec-20 is a non-standard amino acid, selenocysteine. Polar residues-rich tracts occupy residues 30 to 43 (INNA…LISK) and 53 to 63 (GISSTSNSPQE). The next 4 helical transmembrane spans lie at 74 to 94 (ILTL…PVLI), 102 to 122 (VSAG…LSIL), 144 to 164 (IKFG…FDIL), and 199 to 219 (VMGW…LLVG). Residue Sec-88 is a non-standard amino acid, selenocysteine.

Its subcellular location is the membrane. This chain is Membrane selenoprotein (msp), found in Dictyostelium discoideum (Social amoeba).